The primary structure comprises 1264 residues: Regulator of G-protein signaling 22 (1264 aa).

The tract at residues 565-587 (EEFSLSQPPKSPNKSPEVKTATQ) is disordered. The span at 568 to 578 (SLSQPPKSPNK) shows a compositional bias: polar residues. 2 RGS domains span residues 852–980 (KFSD…AARQ) and 1021–1145 (AFRK…TDEN). A coiled-coil region spans residues 1142–1174 (TDENIMSVLERRQEYNKQKKKLAVLEDEKSGKD).

Interacts with GNA11, GNA12 and GNA13. Testis-specific. Expressed in Leydig cells and spermatogenic cells from the spermatogonia to spermatid stages (at protein level).

Its subcellular location is the cytoplasm. It is found in the nucleus. Inhibits signal transduction by increasing the GTPase activity of G protein alpha subunits thereby driving them into their inactive GDP-bound form. In Homo sapiens (Human), this protein is Regulator of G-protein signaling 22 (RGS22).